Here is a 34-residue protein sequence, read N- to C-terminus: PRRRRRSSRPVRRRRRYRRSTAARRRRRVVRRRR.

The interval 1-34 is disordered; that stretch reads PRRRRRSSRPVRRRRRYRRSTAARRRRRVVRRRR.

In terms of tissue distribution, testis.

It is found in the nucleus. The protein localises to the chromosome. Protamines substitute for histones in the chromatin of sperm during the haploid phase of spermatogenesis. They compact sperm DNA into a highly condensed, stable and inactive complex. This chain is Protamine-Z1/Z2, found in Sarda orientalis (Striped bonito).